We begin with the raw amino-acid sequence, 178 residues long: ATP synthase subunit delta (178 aa).

It belongs to the ATPase delta chain family. In terms of assembly, F-type ATPases have 2 components, F(1) - the catalytic core - and F(0) - the membrane proton channel. F(1) has five subunits: alpha(3), beta(3), gamma(1), delta(1), epsilon(1). F(0) has three main subunits: a(1), b(2) and c(10-14). The alpha and beta chains form an alternating ring which encloses part of the gamma chain. F(1) is attached to F(0) by a central stalk formed by the gamma and epsilon chains, while a peripheral stalk is formed by the delta and b chains.

It is found in the cell membrane. Functionally, f(1)F(0) ATP synthase produces ATP from ADP in the presence of a proton or sodium gradient. F-type ATPases consist of two structural domains, F(1) containing the extramembraneous catalytic core and F(0) containing the membrane proton channel, linked together by a central stalk and a peripheral stalk. During catalysis, ATP synthesis in the catalytic domain of F(1) is coupled via a rotary mechanism of the central stalk subunits to proton translocation. Its function is as follows. This protein is part of the stalk that links CF(0) to CF(1). It either transmits conformational changes from CF(0) to CF(1) or is implicated in proton conduction. The sequence is that of ATP synthase subunit delta from Streptococcus sanguinis (strain SK36).